Consider the following 173-residue polypeptide: Superoxide dismutase [Cu-Zn] 2 (173 aa).

A signal peptide spans 1 to 19 (MKRLSLAMVTLLACAGAQA). 3 residues coordinate Cu cation: His67, His69, and His92. Cys74 and Cys169 form a disulfide bridge. Zn(2+) is bound by residues His92, His101, His109, and Asp112. His147 is a binding site for Cu cation.

It belongs to the Cu-Zn superoxide dismutase family. In terms of assembly, monomer. Cu cation serves as cofactor. Zn(2+) is required as a cofactor.

The protein localises to the periplasm. It catalyses the reaction 2 superoxide + 2 H(+) = H2O2 + O2. Its function is as follows. Destroys radicals which are normally produced within the cells and which are toxic to biological systems. This chain is Superoxide dismutase [Cu-Zn] 2 (sodC), found in Salmonella typhimurium (strain LT2 / SGSC1412 / ATCC 700720).